A 216-amino-acid chain; its full sequence is Imidazole glycerol phosphate synthase subunit HisH (216 aa).

A Glutamine amidotransferase type-1 domain is found at 2–216 (RVAIIDYGSG…LIANFLKWKP (215 aa)). Cys88 (nucleophile) is an active-site residue. Catalysis depends on residues His196 and Glu198.

In terms of assembly, heterodimer of HisH and HisF.

Its subcellular location is the cytoplasm. The enzyme catalyses 5-[(5-phospho-1-deoxy-D-ribulos-1-ylimino)methylamino]-1-(5-phospho-beta-D-ribosyl)imidazole-4-carboxamide + L-glutamine = D-erythro-1-(imidazol-4-yl)glycerol 3-phosphate + 5-amino-1-(5-phospho-beta-D-ribosyl)imidazole-4-carboxamide + L-glutamate + H(+). The catalysed reaction is L-glutamine + H2O = L-glutamate + NH4(+). Its pathway is amino-acid biosynthesis; L-histidine biosynthesis; L-histidine from 5-phospho-alpha-D-ribose 1-diphosphate: step 5/9. Its function is as follows. IGPS catalyzes the conversion of PRFAR and glutamine to IGP, AICAR and glutamate. The HisH subunit catalyzes the hydrolysis of glutamine to glutamate and ammonia as part of the synthesis of IGP and AICAR. The resulting ammonia molecule is channeled to the active site of HisF. The chain is Imidazole glycerol phosphate synthase subunit HisH from Brucella suis biovar 1 (strain 1330).